The following is a 68-amino-acid chain: UPF0434 protein BTH_I0741 (68 aa).

This sequence belongs to the UPF0434 family.

The chain is UPF0434 protein BTH_I0741 from Burkholderia thailandensis (strain ATCC 700388 / DSM 13276 / CCUG 48851 / CIP 106301 / E264).